The sequence spans 715 residues: Palmitoyltransferase ZDHHC5 (715 aa).

Over 1-13 the chain is Cytoplasmic; it reads MPAESGKRFKPSK. The chain crosses the membrane as a helical span at residues 14–34; it reads YVPVSAAAIFLVGATTLFFAF. The Extracellular portion of the chain corresponds to 35–38; that stretch reads TCPG. A helical transmembrane segment spans residues 39-59; sequence LSLCVSPAVPIYNAIVFLFVL. Topologically, residues 60-148 are cytoplasmic; sequence ANFSMATFMD…NCIGRRNYRY (89 aa). Tyr91 carries the phosphotyrosine modification. Positions 104-154 constitute a DHHC domain; the sequence is KWCATCRFYRPPRCSHCSVCDNCVEEFDHHCPWVNNCIGRRNYRYFFLFLL. The active-site S-palmitoyl cysteine intermediate is Cys134. A helical membrane pass occupies residues 149-169; sequence FFLFLLSLTAHIMGVFGFGLL. The Extracellular segment spans residues 170-191; it reads YVLYHMEELSGVRTAVTMAVMC. The helical transmembrane segment at 192 to 212 threads the bilayer; sequence VAGLFFIPVAGLTGFHVVLVA. Topologically, residues 213–715 are cytoplasmic; it reads RGRTTNEQVT…VGGTTYEISV (503 aa). Ser247, Ser296, and Ser299 each carry phosphoserine. Positions 289-648 are disordered; it reads GELRRSKSKG…SQKAPAGVSE (360 aa). Thr303 is subject to Phosphothreonine. Phosphoserine is present on Ser345. 2 positions are modified to phosphothreonine: Thr348 and Thr350. Positions 359–373 are enriched in low complexity; the sequence is SSSSTSAAMPHSSSA. 4 positions are modified to phosphoserine: Ser380, Ser398, Ser406, and Ser409. The residue at position 411 (Thr411) is a Phosphothreonine. Phosphoserine is present on residues Ser415, Ser425, Ser429, and Ser432. Residues 422–432 are compositionally biased toward low complexity; it reads SSGSRSSSLKS. Thr436 carries the post-translational modification Phosphothreonine. Over residues 442-478 the composition is skewed to polar residues; that stretch reads QLQSIRSEGTTSTSYKSLANQTRNGSLSYDSLLTPSD. Residues Ser529 and Ser554 each carry the phosphoserine modification. At Arg617 the chain carries Omega-N-methylarginine. Ser621 carries the post-translational modification Phosphoserine. Phosphothreonine is present on Thr659. The disordered stretch occupies residues 666–715; that stretch reads LKTAYSKSNGQPKSIGSASPGPGQQPLSSPTRGGVKKVSGVGGTTYEISV. Residues 668–679 are compositionally biased toward polar residues; it reads TAYSKSNGQPKS. Positions 681 to 695 are enriched in low complexity; it reads GSASPGPGQQPLSSP. Phosphoserine is present on residues Ser684 and Ser694. Arg697 is modified (omega-N-methylarginine).

It belongs to the DHHC palmitoyltransferase family. ERF2/ZDHHC9 subfamily. Phosphorylation regulates association with endocytic proteins and its subcellular localization. Phosphorylation by LYN during fatty acid uptake leads to inactivation of the activity. In terms of processing, autopalmitoylated. Palmitoylation of the C-terminal tail regulates stimulation-dependent plasma membrane motility.

The protein resides in the cell membrane. The catalysed reaction is L-cysteinyl-[protein] + hexadecanoyl-CoA = S-hexadecanoyl-L-cysteinyl-[protein] + CoA. Its function is as follows. Palmitoyltransferase that catalyzes the addition of palmitate onto various protein substrates such as CTNND2, CD36, GSDMD, NLRP3, NOD1, NOD2, STAT3 and S1PR1 thus plays a role in various biological processes including cell adhesion, inflammation, fatty acid uptake, bacterial sensing or cardiac functions. Plays an important role in the regulation of synapse efficacy by mediating palmitoylation of delta-catenin/CTNND2, thereby increasing synaptic delivery and surface stabilization of alpha-amino-3-hydroxy-5-methyl-4-isoxazole propionic acid receptors (AMPARs). Under basal conditions, remains at the synaptic membrane through FYN-mediated phosphorylation that prevents association with endocytic proteins. Neuronal activity enhances the internalization and trafficking of DHHC5 from spines to dendritic shafts where it palmitoylates delta-catenin/CTNND2. Regulates cell adhesion at the plasma membrane by palmitoylating GOLGA7B and DSG2. Plays a role in innate immune response by mediating the palmitoylation of NOD1 and NOD2 and their proper recruitment to the bacterial entry site and phagosomes. Also participates in fatty acid uptake by palmitoylating CD36 and thereby targeting it to the plasma membrane. Upon binding of fatty acids to CD36, gets phosphorylated by LYN leading to inactivation and subsequent CD36 caveolar endocytosis. Controls oligodendrocyte development by catalyzing STAT3 palmitoylation. Acts as a regulator of inflammatory response by mediating palmitoylation of NLRP3 and GSDMD. Palmitoylates NLRP3 to promote inflammasome assembly and activation. Activates pyroptosis by catalyzing palmitoylation of gasdermin-D (GSDMD), thereby promoting membrane translocation and pore formation of GSDMD. This chain is Palmitoyltransferase ZDHHC5 (ZDHHC5), found in Canis lupus familiaris (Dog).